The sequence spans 365 residues: UPF0283 membrane protein Avi_2471 (365 aa).

The segment covering 1 to 10 (MSKAPEDQRP) has biased composition (basic and acidic residues). The tract at residues 1–47 (MSKAPEDQRPMPRRPAAFSLEEPSSSPARPPFAEAQEPQRRAPKSFD) is disordered. A run of 2 helical transmembrane segments spans residues 83–103 (FGKL…GLWI) and 117–137 (LGYT…VVVI).

The protein belongs to the UPF0283 family.

It localises to the cell inner membrane. This Allorhizobium ampelinum (strain ATCC BAA-846 / DSM 112012 / S4) (Agrobacterium vitis (strain S4)) protein is UPF0283 membrane protein Avi_2471.